A 578-amino-acid chain; its full sequence is MVFTAPCWVPPLPSDLPDSTTLEEFIFCQVKDSQTRSELDRSILICGTQGREYTVQESMERTGRLAQGLSAWLNWPQKSPGKDWKVAAIFNVNCVDFFSISHAIHRLGGTISAINASSTADELEAQLRLSNAQAIFTCNTLLKIAMKASQRVGIPLANIFLTDAPGSYRPDDVYPFQEIDNIVRTAKSSLPLLQLGRGQGASTPAYICFSSGTSGAQKPVLLSHQGIIANIVQINTFEKFRQKGPNISLCILPLAHSYGLVCVAYSALYRGDRLAVLPSSGVEDLLSIVEKLKINTLYLVPTLVSRILSGGKAGRHDLRCVKEVYTGGAPLHPMLGEHILRHHPTWKIKQCYGATEAGTAVSVTSDCDLWPGSVGCLLPGVQAKIVKSDGSETTKHDESGELWVSSPSLAIGYLSNPLATKTTFTVDNTGKTWLRTGDEVKICLSPNGNEHLFIVDRIKDIIKVKGFQVAPVELEQLLLSNDFVEEVAVTSRQDEGEEERPQAFVVRSQVGLEEPQGAVAESLHALVKARKARYKWLHPHVIFVDSLPKTTSGKIMRRALRNMSPANSEVNSRLSSKI.

ATP-binding positions include 210–218, 350–355, aspartate 438, arginine 457, and lysine 554; these read SSGTSGAQK and QCYGAT. The SBD1 stretch occupies residues 281–350; sequence GVEDLLSIVE…RHHPTWKIKQ (70 aa). An SBD2 region spans residues 351-413; sequence CYGATEAGTA…VSSPSLAIGY (63 aa). The Peroxisomal targeting signal type 1 signature appears at 576-578; it reads SKI.

The protein belongs to the ATP-dependent AMP-binding enzyme family.

The protein localises to the peroxisome. The protein operates within mycotoxin biosynthesis. Its function is as follows. Acyl-CoA ligase; part of the gene clusters that mediate the biosynthesis of the host-selective toxins (HSTs) AF-toxins responsible for Alternaria black spot of strawberry disease by the strawberry pathotype. AF-toxin I and III are valine derivatives of 2,3-dyhydroxy-isovaleric acid and 2-hydroxy-isovaleric acid respectively, while AF II is an isoleucine derivative of 2-hydroxy-valeric acid. These derivatives are bound to a 9,10-epoxy-8-hydroxy-9-methyl-decatrienoic acid (EDA) moiety. On cellular level, AF-toxins affect plasma membrane of susceptible cells and cause a sudden increase in loss of K(+) after a few minutes of toxin treatment. The aldo-keto reductase AFTS1 catalyzes the conversion of 2-keto-isovaleric acid (2-KIV) to 2-hydroxy-isovaleric acid (2-HIV) by reduction of its ketone to an alcohol. The acyl-CoA ligase AFT1, the hydrolase AFT2 and the enoyl-CoA hydratases AFT3 and AFT6, but also the polyketide synthase AFT9, the acyl-CoA dehydrogenase AFT10, the cytochrome P450 monooxygenase AFT11 and the oxidoreductase AFT12 are all involved in the biosynthesis of the AK-, AF- and ACT-toxin common EDA structural moiety. The exact role of each enzyme, and of additional enzymes identified within the AF-toxin clusters have still to be determined. The protein is Acyl-CoA ligase AFT1-1 of Alternaria alternata (Alternaria rot fungus).